The sequence spans 942 residues: VPS35 endosomal protein sorting factor-like (942 aa).

This sequence belongs to the VPS35L family. Component of the heterotrimeric retriever complex.

The protein localises to the endosome. In terms of biological role, acts as a component of the retriever complex. The retriever complex is a heterotrimeric complex related to retromer cargo-selective complex (CSC) and essential for retromer-independent retrieval and recycling of numerous cargos. The polypeptide is VPS35 endosomal protein sorting factor-like (Drosophila melanogaster (Fruit fly)).